The sequence spans 65 residues: UPF0434 protein bsr0601 (65 aa).

This sequence belongs to the UPF0434 family.

The polypeptide is UPF0434 protein bsr0601 (Bradyrhizobium diazoefficiens (strain JCM 10833 / BCRC 13528 / IAM 13628 / NBRC 14792 / USDA 110)).